A 990-amino-acid chain; its full sequence is Pro-apoptotic serine protease NMA111 (990 aa).

The segment at 1-32 is disordered; it reads MSVTNSNRKRSLSEVSEGSDPEAPAKTRNSYT. Positions 73–263 are serine protease; that stretch reads VVSIHFSQVA…LPLDRILRAL (191 aa). Residues histidine 111, aspartate 142, and serine 225 each act as charge relay system in the active site. 2 consecutive PDZ domains span residues 290–368 and 758–843; these read RRLG…QRGG and SILT…VREG.

This sequence belongs to the peptidase S1C family.

It is found in the nucleus. Nuclear serine protease which mediates apoptosis. This Vanderwaltozyma polyspora (strain ATCC 22028 / DSM 70294 / BCRC 21397 / CBS 2163 / NBRC 10782 / NRRL Y-8283 / UCD 57-17) (Kluyveromyces polysporus) protein is Pro-apoptotic serine protease NMA111 (NMA111).